A 243-amino-acid polypeptide reads, in one-letter code: Endochitinase (243 aa).

Cystine bridges form between Cys-23-Cys-85, Cys-97-Cys-105, and Cys-223-Cys-236. Residue Glu-67 is the Proton donor of the active site.

It localises to the vacuole. It carries out the reaction Random endo-hydrolysis of N-acetyl-beta-D-glucosaminide (1-&gt;4)-beta-linkages in chitin and chitodextrins.. Defense against chitin-containing fungal pathogens. Shows activity on chitin, tetra-N-acetylglucosamine and chitosan. This Carica papaya (Papaya) protein is Endochitinase.